Consider the following 400-residue polypeptide: GDNF family receptor alpha-3 (400 aa).

The N-terminal stretch at 1-31 (MVRPLNPRPLPPVVLMLLLLLPPSPLPLAAG) is a signal peptide. Cysteines 51 and 57 form a disulfide. N-linked (GlcNAc...) asparagine glycans are attached at residues Asn-95 and Asn-148. 10 disulfides stabilise this stretch: Cys-162–Cys-218, Cys-169–Cys-175, Cys-186–Cys-196, Cys-191–Cys-239, Cys-220–Cys-227, Cys-248–Cys-316, Cys-255–Cys-261, Cys-272–Cys-288, Cys-281–Cys-340, and Cys-318–Cys-328. N-linked (GlcNAc...) asparagine glycosylation is present at Asn-309. Asn-374 is lipidated: GPI-anchor amidated asparagine. Positions 375 to 400 (PAVRPQPWVPSLFSCTLPLILLLSLW) are cleaved as a propeptide — removed in mature form.

Belongs to the GDNFR family. In terms of assembly, interacts with ARTN ligand and RET: forms a 2:2:2 ternary complex composed of ARTN ligand, GFRA3 and RET receptor. Interacts with SORL1. Post-translationally, N-glycosylated. As to expression, widely expressed in adult and fetus which exhibit a similar pattern. Essentially not expressed in the central nervous system, but highly expressed in several sensory and sympathetic ganglia of the peripheral nervous system. Moderate expression in many non-neuronal tissues, particularly those of the digestive and urogenital systems, but high expression in stomach and appendix. Several types of glandular tissues show low expression. Very low or no expression detected in the hematopoietic system.

It localises to the cell membrane. Its function is as follows. Receptor for artemin (ARTN), a growth factor that supports the survival of sensory and sympathetic peripheral neurons. ARTN-binding leads to autophosphorylation and activation of the RET receptor. In Homo sapiens (Human), this protein is GDNF family receptor alpha-3 (GFRA3).